The following is a 252-amino-acid chain: Proteasome subunit alpha type-7-1B (252 aa).

The protein belongs to the peptidase T1A family. In terms of assembly, the 26S proteasome consists of a 20S proteasome core and two 19S regulatory subunits. The 20S proteasome core is composed of 28 subunits that are arranged in four stacked rings, resulting in a barrel-shaped structure. The two end rings are each formed by seven alpha subunits, and the two central rings are each formed by seven beta subunits. The catalytic chamber with the active sites is on the inside of the barrel. In terms of tissue distribution, testis specific.

Its subcellular location is the cytoplasm. The protein localises to the nucleus. Functionally, the proteasome is a multicatalytic proteinase complex which is characterized by its ability to cleave peptides with Arg, Phe, Tyr, Leu, and Glu adjacent to the leaving group at neutral or slightly basic pH. The proteasome has an ATP-dependent proteolytic activity. The protein is Proteasome subunit alpha type-7-1B (Prosalpha4T2) of Drosophila melanogaster (Fruit fly).